Consider the following 345-residue polypeptide: Platelet-derived growth factor C (345 aa).

Positions 1–22 (MLLLGLLLLTSALAGQRTGTRA) are cleaved as a signal peptide. A compositionally biased stretch (polar residues) spans 24 to 33 (SNLSSKLQLS). The segment at 24–45 (SNLSSKLQLSSDKEQNGVQDPR) is disordered. N-linked (GlcNAc...) asparagine glycosylation occurs at Asn25. Basic and acidic residues predominate over residues 34–45 (SDKEQNGVQDPR). Positions 46-163 (HERVVTISGN…PGFCIHYSII (118 aa)) constitute a CUB domain. The N-linked (GlcNAc...) asparagine glycan is linked to Asn55. 4 disulfide bridges follow: Cys104/Cys124, Cys250/Cys294, Cys280/Cys335, and Cys287/Cys337.

The protein belongs to the PDGF/VEGF growth factor family. Homodimer; disulfide-linked. Interacts with PDGFRA homodimers, and with heterodimers formed by PDGFRA and PDGFRB. Interacts (via CUB domain) with PLAT (via kringle domain). In terms of processing, proteolytic removal of the N-terminal CUB domain releasing the core domain is necessary for unmasking the receptor-binding epitopes of the core domain. Cleavage after basic residues in the hinge region (region connecting the CUB and growth factor domains) gives rise to the receptor-binding form. Cleaved by PLAT and PLG. Sumoylated by SUMO1. Post-translationally, N-glycosylated. Mainly expressed in kidney, testis, liver, heart and brain (at protein level). Highly expressed in airway epithelium, interstitial cells and alveolar macrophages in the lung of mice overexpressing IL13. Expressed in the ovaries.

The protein resides in the cytoplasm. It is found in the cytosol. The protein localises to the secreted. Its subcellular location is the nucleus. It localises to the cytoplasmic granule. The protein resides in the cell membrane. Its function is as follows. Growth factor that plays an essential role in the regulation of embryonic development, cell proliferation, cell migration, survival and chemotaxis. Potent mitogen and chemoattractant for cells of mesenchymal origin. Required for normal skeleton formation during embryonic development, especially for normal development of the craniofacial skeleton and for normal development of the palate. Required for normal skin morphogenesis during embryonic development. Plays an important role in wound healing, where it appears to be involved in three stages: inflammation, proliferation and remodeling. Plays an important role in angiogenesis and blood vessel development. Involved in fibrotic processes, in which transformation of interstitial fibroblasts into myofibroblasts plus collagen deposition occurs. The CUB domain has mitogenic activity in coronary artery smooth muscle cells, suggesting a role beyond the maintenance of the latency of the PDGF domain. In the nucleus, PDGFC seems to have additional function. The polypeptide is Platelet-derived growth factor C (Pdgfc) (Mus musculus (Mouse)).